Reading from the N-terminus, the 448-residue chain is Ribosomal protein uS12 methylthiotransferase RimO (448 aa).

The MTTase N-terminal domain occupies P6–P116. 6 residues coordinate [4Fe-4S] cluster: C15, C51, C80, C147, C151, and C154. Positions L133–R371 constitute a Radical SAM core domain. Residues A373–E439 form the TRAM domain.

Belongs to the methylthiotransferase family. RimO subfamily. It depends on [4Fe-4S] cluster as a cofactor.

Its subcellular location is the cytoplasm. It carries out the reaction L-aspartate(89)-[ribosomal protein uS12]-hydrogen + (sulfur carrier)-SH + AH2 + 2 S-adenosyl-L-methionine = 3-methylsulfanyl-L-aspartate(89)-[ribosomal protein uS12]-hydrogen + (sulfur carrier)-H + 5'-deoxyadenosine + L-methionine + A + S-adenosyl-L-homocysteine + 2 H(+). Catalyzes the methylthiolation of an aspartic acid residue of ribosomal protein uS12. The protein is Ribosomal protein uS12 methylthiotransferase RimO of Paramagnetospirillum magneticum (strain ATCC 700264 / AMB-1) (Magnetospirillum magneticum).